Here is a 440-residue protein sequence, read N- to C-terminus: Chromosome partition protein MukF (440 aa).

The leucine-zipper stretch occupies residues 208–236 (LSETSGTLRELQDTLEAAGDKLQANLLRI).

The protein belongs to the MukF family. Interacts, and probably forms a ternary complex, with MukE and MukB via its C-terminal region. The complex formation is stimulated by calcium or magnesium. It is required for an interaction between MukE and MukB.

The protein localises to the cytoplasm. The protein resides in the nucleoid. Involved in chromosome condensation, segregation and cell cycle progression. May participate in facilitating chromosome segregation by condensation DNA from both sides of a centrally located replisome during cell division. Not required for mini-F plasmid partitioning. Probably acts via its interaction with MukB and MukE. Overexpression results in anucleate cells. It has a calcium binding activity. The protein is Chromosome partition protein MukF of Salmonella arizonae (strain ATCC BAA-731 / CDC346-86 / RSK2980).